Here is a 170-residue protein sequence, read N- to C-terminus: Microfibrillar-associated protein 5 (170 aa).

Residues 1 to 20 form the signal peptide; the sequence is MTFFGPKVLLLLTALIMSSG. A Cell attachment site motif is present at residues 30 to 32; it reads RGD. N-linked (GlcNAc...) asparagine glycosylation occurs at Asn76.

The protein belongs to the MFAP family. In terms of assembly, interacts with TGFB2. Interacts with BMP2. Interacts with FBN1 (via N-terminal domain) and FBN2. In terms of processing, forms intermolecular disulfide bonds either with other MAGP-2 molecules or with other components of the microfibrils. In terms of tissue distribution, associated with fibrillin-containing microfibrils of the developing nuchal ligament.

The protein resides in the secreted. It is found in the extracellular space. It localises to the extracellular matrix. May play a role in hematopoiesis. In the cardiovascular system, could regulate growth factors or participate in cell signaling in maintaining large vessel integrity. Component of the elastin-associated microfibrils. This Bos taurus (Bovine) protein is Microfibrillar-associated protein 5 (MFAP5).